The primary structure comprises 601 residues: MAGASELGTGPGAAGGDGDDSLYPIAVLIDELRNEDVQLRLNSIKKLSTIALALGVERTRSELLPFLTDTIYDEDEVLLALAEQLGNFTGLVGGPDFAHCLLPPLENLATVEETVVRDKAVESLRQISQEHTPVALEAYFVPLVKRLASGDWFTSRTSACGLFSVCYPRASNAVKAEIRQQFRSLCSDDTPMVRRAAASKLGEFAKVLELDSVKSEIVPLFTSLASDEQDSVRLLAVEACVSIAQLLSQDDLETLVMPTLRQAAEDKSWRVRYMVADRFSELQKAMGPKITLNDLIPAFQNLLKDCEAEVRAAAAHKVKELGENLPIEDRETIIMNQILPYIKELVSDTNQHVKSALASVIMGLSTILGKENTIEHLLPLFLAQLKDECPDVRLNIISNLDCVNEVIGIRQLSQSLLPAIVELAEDAKWRVRLAIIEYMPLLAGQLGVEFFDEKLNSLCMAWLVDHVYAIREAATNNLMKLVQKFGTEWAQNTIVPKVLVMANDPNYLHRMTTLFCINALSEACGQEITTKQMLPIVLKMAGDQVANVRFNVAKSLQKIGPILDTNALQGEVKPVLQKLGQDEDMDVKYFAQEAISVLALA.

Ala2 bears the N-acetylalanine mark. 15 HEAT repeats span residues 20 to 58 (DSLY…GVER), 59 to 96 (TRSE…GGPD), 97 to 135 (FAHC…TPVA), 136 to 173 (LEAY…ASNA), 174 to 212 (VKAE…ELDS), 213 to 251 (VKSE…SQDD), 252 to 290 (LETL…GPKI), 291 to 333 (TLND…RETI), 334 to 372 (IMNQ…GKEN), 373 to 411 (TIEH…GIRQ), 412 to 450 (LSQS…GVEF), 451 to 489 (FDEK…GTEW), 490 to 528 (AQNT…GQEI), 529 to 567 (TTKQ…DTNA), and 568 to 601 (LQGE…LALA).

Belongs to the phosphatase 2A regulatory subunit A family. In terms of assembly, PP2A consists of a common heterodimeric core enzyme, composed of a 36 kDa catalytic subunit (subunit C) and a 65 kDa constant regulatory subunit (PR65 or subunit A), that associates with a variety of regulatory subunits. Proteins that associate with the core dimer include three families of regulatory subunits B (the R2/B/PR55/B55, R3/B''/PR72/PR130/PR59 and R5/B'/B56 families), the 48 kDa variable regulatory subunit, viral proteins, and cell signaling molecules. Interacts with IPO9. Interacts with SGO1. Interacts with RAF1.

Its function is as follows. The PR65 subunit of protein phosphatase 2A serves as a scaffolding molecule to coordinate the assembly of the catalytic subunit and a variable regulatory B subunit. This is Serine/threonine-protein phosphatase 2A 65 kDa regulatory subunit A beta isoform (PPP2R1B) from Homo sapiens (Human).